The following is a 219-amino-acid chain: Glutathione S-transferase U19 (219 aa).

Residues 3-82 enclose the GST N-terminal domain; it reads NEVILLDFWP…YIDEVWSHKN (80 aa). Residues 13–14, 39–40, 53–54, and 66–67 contribute to the glutathione site; these read SM, NK, KI, and ES. Positions 88 to 208 constitute a GST C-terminal domain; sequence DPYLRAQARF…LPDPEKVTEF (121 aa). Position 198 is a phosphoserine (S198).

The protein belongs to the GST superfamily. Tau family.

Its subcellular location is the cytoplasm. The protein resides in the cytosol. It catalyses the reaction RX + glutathione = an S-substituted glutathione + a halide anion + H(+). Its function is as follows. Catalyzes the glutathionylation of 12-oxophytodienoate (OPDA). In vitro, possesses glutathione S-transferase activity toward 1-chloro-2,4-dinitrobenzene (CDNB) and benzyl isothiocyanate (BITC), and glutathione peroxidase activity toward cumene hydroperoxide. The protein is Glutathione S-transferase U19 (GSTU19) of Arabidopsis thaliana (Mouse-ear cress).